Reading from the N-terminus, the 427-residue chain is Retron Mx65 reverse transcriptase (427 aa).

A Reverse transcriptase domain is found at 136 to 366; that stretch reads RHYSIHRPRE…GAQRVTGVTV (231 aa). 3 residues coordinate Mg(2+): Asp-219, Asp-315, and Asp-316.

Belongs to the bacterial reverse transcriptase family.

The enzyme catalyses DNA(n) + a 2'-deoxyribonucleoside 5'-triphosphate = DNA(n+1) + diphosphate. Functionally, reverse transcriptase (RT) responsible for synthesis of msDNA-Mx65 (a branched molecule with RNA linked by a 2',5'-phosphodiester bond to ssDNA). The retron transcript serves as primer (from a conserved internal G residue) and template for the reaction, and codes for the RT. The retron is involved in antiviral defense. The polypeptide is Retron Mx65 reverse transcriptase (Myxococcus xanthus).